Consider the following 60-residue polypeptide: UPF0434 protein mma_2578 (60 aa).

It belongs to the UPF0434 family.

This Janthinobacterium sp. (strain Marseille) (Minibacterium massiliensis) protein is UPF0434 protein mma_2578.